The following is a 483-amino-acid chain: Probable cobyric acid synthase (483 aa).

The region spanning Glu247–Phe433 is the GATase cobBQ-type domain. The active-site Nucleophile is Cys325. Residue His425 is part of the active site.

This sequence belongs to the CobB/CobQ family. CobQ subfamily.

Its pathway is cofactor biosynthesis; adenosylcobalamin biosynthesis. Its function is as follows. Catalyzes amidations at positions B, D, E, and G on adenosylcobyrinic A,C-diamide. NH(2) groups are provided by glutamine, and one molecule of ATP is hydrogenolyzed for each amidation. In Thermococcus gammatolerans (strain DSM 15229 / JCM 11827 / EJ3), this protein is Probable cobyric acid synthase.